A 238-amino-acid chain; its full sequence is Ribonuclease PH (238 aa).

Residues Arg-86 and 124–126 contribute to the phosphate site; that span reads GTR.

It belongs to the RNase PH family. As to quaternary structure, homohexameric ring arranged as a trimer of dimers.

It catalyses the reaction tRNA(n+1) + phosphate = tRNA(n) + a ribonucleoside 5'-diphosphate. Its function is as follows. Phosphorolytic 3'-5' exoribonuclease that plays an important role in tRNA 3'-end maturation. Removes nucleotide residues following the 3'-CCA terminus of tRNAs; can also add nucleotides to the ends of RNA molecules by using nucleoside diphosphates as substrates, but this may not be physiologically important. Probably plays a role in initiation of 16S rRNA degradation (leading to ribosome degradation) during starvation. The sequence is that of Ribonuclease PH from Hahella chejuensis (strain KCTC 2396).